Reading from the N-terminus, the 475-residue chain is Aspartate ammonia-lyase (475 aa).

L-aspartate contacts are provided by threonine 104, serine 143, threonine 144, asparagine 145, threonine 190, and histidine 191. The interval 320–329 (GSSIMPGKVN) is SS loop. The active-site Proton acceptor is serine 321. Residues serine 322 and lysine 327 each contribute to the L-aspartate site.

Belongs to the class-II fumarase/aspartase family. Aspartase subfamily. Homotetramer.

It catalyses the reaction L-aspartate = fumarate + NH4(+). Catalyzes the reversible conversion of L-aspartate to fumarate and ammonia. The chain is Aspartate ammonia-lyase from Bacillus subtilis (strain 168).